Here is a 779-residue protein sequence, read N- to C-terminus: Endonuclease MutS2 (779 aa).

Residue 328 to 335 coordinates ATP; sequence GPNTGGKT. Residues 704–779 enclose the Smr domain; sequence LDLRGKRYEE…GSGATIVTLG (76 aa).

The protein belongs to the DNA mismatch repair MutS family. MutS2 subfamily. Homodimer. Binds to stalled ribosomes, contacting rRNA.

In terms of biological role, endonuclease that is involved in the suppression of homologous recombination and thus may have a key role in the control of bacterial genetic diversity. Its function is as follows. Acts as a ribosome collision sensor, splitting the ribosome into its 2 subunits. Detects stalled/collided 70S ribosomes which it binds and splits by an ATP-hydrolysis driven conformational change. Acts upstream of the ribosome quality control system (RQC), a ribosome-associated complex that mediates the extraction of incompletely synthesized nascent chains from stalled ribosomes and their subsequent degradation. Probably generates substrates for RQC. The sequence is that of Endonuclease MutS2 from Streptococcus pyogenes serotype M5 (strain Manfredo).